Reading from the N-terminus, the 195-residue chain is Ribonuclease HII (195 aa).

The RNase H type-2 domain maps to 8 to 195; the sequence is WGVVGVDEAG…FAPVRRLLGG (188 aa). The a divalent metal cation site is built by aspartate 14, glutamate 15, and aspartate 106.

The protein belongs to the RNase HII family. It depends on Mn(2+) as a cofactor. Mg(2+) is required as a cofactor.

The protein localises to the cytoplasm. The enzyme catalyses Endonucleolytic cleavage to 5'-phosphomonoester.. Functionally, endonuclease that specifically degrades the RNA of RNA-DNA hybrids. The sequence is that of Ribonuclease HII from Halorhodospira halophila (strain DSM 244 / SL1) (Ectothiorhodospira halophila (strain DSM 244 / SL1)).